The sequence spans 205 residues: Transcriptional regulatory protein PdtaR (205 aa).

The Response regulatory domain maps to 15-129 (RVLIAEDEAL…DLIPAIELAV (115 aa)). The residue at position 65 (aspartate 65) is a 4-aspartylphosphate. The 62-residue stretch at 135–196 (ITALEGEVAT…TMKRVAEVVL (62 aa)) folds into the ANTAR domain.

Phosphorylated and activated by PdtaS.

The protein localises to the cytoplasm. Member of the two-component regulatory system PdtaR/PdtaS. This two-component system plays an essential role in mycobacterial adaptation to poor nutrient conditions. PdtaR probably acts at the level of transcriptional antitermination rather than transcriptional initiation. Its function is as follows. In addition, the PdtaR/PdtaS two-component system controls copper and nitric oxide (NO) resistance downstream of the intramembrane protease Rip1. This coupled Rip1/PdtaS/PdtaR circuit controls NO resistance and acute lung infection in mice by relieving PdtaR/PdtaS-mediated repression of isonitrile chalkophore biosynthesis. Two signals are required to fully inactivate the PdtaR/PdtaS system and mediate NO resistance: a cytoplasmic inhibitory signal through the PdtaS kinase mediated by direct sensing of NO and the production of PPE1-5', an NO-induced small RNA, to sequester PdtaR. The sequence is that of Transcriptional regulatory protein PdtaR (pdtaR) from Mycobacterium tuberculosis (strain CDC 1551 / Oshkosh).